Here is a 282-residue protein sequence, read N- to C-terminus: MTGESGAAAAPSITLNDEHTMPVLGLGVAELSDDETERAVSAALEIGCRLIDTAYAYGNEAAVGRAIAASGVAREELFVTTKLATPDQGFTRSQEACRASLDRLGLDYVDLYLIHWPAPPVGKYVDAWGGMIQSRGEGHARSIGVSNFTAENIENLIDLTFVTPAVNQIELHPLLNQDELRKANAQHTVVTQSYCPLALGRLLDNPTVTSIASEYVKTPAQVLLRWNLQLGNAVVVRSARPERIASNFDVFDFELAAEHMDALGGLNDGTRVREDPLTYAGT.

Tyrosine 57 functions as the Proton donor in the catalytic mechanism. The NADPH site is built by leucine 197, valine 235, arginine 237, serine 238, alanine 239, arginine 243, serine 246, asparagine 247, and arginine 273.

The protein belongs to the aldo/keto reductase family.

This Mycobacterium tuberculosis (strain CDC 1551 / Oshkosh) protein is Aldo-keto reductase MT3049.